The chain runs to 287 residues: ATP synthase gamma chain (287 aa).

Belongs to the ATPase gamma chain family. In terms of assembly, F-type ATPases have 2 components, CF(1) - the catalytic core - and CF(0) - the membrane proton channel. CF(1) has five subunits: alpha(3), beta(3), gamma(1), delta(1), epsilon(1). CF(0) has three main subunits: a, b and c.

It localises to the cell inner membrane. Its function is as follows. Produces ATP from ADP in the presence of a proton gradient across the membrane. The gamma chain is believed to be important in regulating ATPase activity and the flow of protons through the CF(0) complex. This is ATP synthase gamma chain from Proteus mirabilis (strain HI4320).